A 119-amino-acid chain; its full sequence is Large ribosomal subunit protein uL14 (119 aa).

Belongs to the universal ribosomal protein uL14 family. In terms of assembly, part of the 50S ribosomal subunit. Forms a cluster with proteins L3 and L19. In the 70S ribosome, L14 and L19 interact and together make contacts with the 16S rRNA in bridges B5 and B8.

Its function is as follows. Binds to 23S rRNA. Forms part of two intersubunit bridges in the 70S ribosome. The chain is Large ribosomal subunit protein uL14 from Ehrlichia chaffeensis (strain ATCC CRL-10679 / Arkansas).